Reading from the N-terminus, the 426-residue chain is Glutamyl-tRNA reductase (426 aa).

Substrate contacts are provided by residues 49-52 (TCNR), serine 109, 114-116 (EGQ), and glutamine 120. The Nucleophile role is filled by cysteine 50. Residue 189–194 (GAGKMS) coordinates NADP(+).

Belongs to the glutamyl-tRNA reductase family. In terms of assembly, homodimer.

The catalysed reaction is (S)-4-amino-5-oxopentanoate + tRNA(Glu) + NADP(+) = L-glutamyl-tRNA(Glu) + NADPH + H(+). It functions in the pathway porphyrin-containing compound metabolism; protoporphyrin-IX biosynthesis; 5-aminolevulinate from L-glutamyl-tRNA(Glu): step 1/2. The protein operates within porphyrin-containing compound metabolism; chlorophyll biosynthesis. In terms of biological role, catalyzes the NADPH-dependent reduction of glutamyl-tRNA(Glu) to glutamate 1-semialdehyde (GSA). The polypeptide is Glutamyl-tRNA reductase (Thermosynechococcus vestitus (strain NIES-2133 / IAM M-273 / BP-1)).